A 160-amino-acid chain; its full sequence is Putative UPF0479 protein YLR466C-A (160 aa).

The next 2 membrane-spanning stretches (helical) occupy residues 39 to 59 (IVFC…KVLQ) and 136 to 156 (VPMI…ISQH).

The protein belongs to the UPF0479 family.

It localises to the membrane. The polypeptide is Putative UPF0479 protein YLR466C-A (Saccharomyces cerevisiae (strain ATCC 204508 / S288c) (Baker's yeast)).